A 462-amino-acid polypeptide reads, in one-letter code: Zinc finger CCCH domain-containing protein 8 (462 aa).

6 C3H1-type zinc fingers span residues 105-133, 156-184, 209-237, 288-316, 367-395, and 422-450; these read RPGE…HPQW, QEGE…HPKE, RPSE…HPKD, RPGE…HPDR, RPGA…HPID, and REDA…HPPP.

This Oryza sativa subsp. japonica (Rice) protein is Zinc finger CCCH domain-containing protein 8.